The following is a 762-amino-acid chain: N,N-dimethylformamidase beta subunit (762 aa).

Heterotetramer of two DmfA1 (alpha) and two DmfA2 (beta) subunits.

It carries out the reaction N,N-dimethylformamide + H2O = dimethylamine + formate. Activity is slightly inhibited by Mg(2+) and Mn(2+), and slightly increased by Cu(2+). Activity is slightly inhibited by the chelating agents 8-hydroxyquinoline, ethylenediaminetetraacetate, o-phenanthroline and 2,2'-bipyridyl. Its function is as follows. Hydrolyzes N,N-dimethylformamide, and to a lesser extent N,N-dimethylacetamide and N,N-diethylacetamide. Has no activity against the substituted amides N-methylformamide, N-ethylformamide, N-ethylformamide and N-methylacetamide or the unsubstituted amides formamide, nicotinamide, acetoamide, benzamide, acetamide and acrylamide. The chain is N,N-dimethylformamidase beta subunit from Alcaligenes sp.